A 342-amino-acid chain; its full sequence is Biotin synthase (342 aa).

Residues 63 to 290 (NTVQLSTLLS…GAMVRLSAGR (228 aa)) enclose the Radical SAM core domain. [4Fe-4S] cluster is bound by residues cysteine 78, cysteine 82, and cysteine 85. [2Fe-2S] cluster-binding residues include cysteine 122, cysteine 153, cysteine 213, and arginine 285.

This sequence belongs to the radical SAM superfamily. Biotin synthase family. In terms of assembly, homodimer. [4Fe-4S] cluster is required as a cofactor. It depends on [2Fe-2S] cluster as a cofactor.

The catalysed reaction is (4R,5S)-dethiobiotin + (sulfur carrier)-SH + 2 reduced [2Fe-2S]-[ferredoxin] + 2 S-adenosyl-L-methionine = (sulfur carrier)-H + biotin + 2 5'-deoxyadenosine + 2 L-methionine + 2 oxidized [2Fe-2S]-[ferredoxin]. It functions in the pathway cofactor biosynthesis; biotin biosynthesis; biotin from 7,8-diaminononanoate: step 2/2. In terms of biological role, catalyzes the conversion of dethiobiotin (DTB) to biotin by the insertion of a sulfur atom into dethiobiotin via a radical-based mechanism. In Cupriavidus pinatubonensis (strain JMP 134 / LMG 1197) (Cupriavidus necator (strain JMP 134)), this protein is Biotin synthase.